The following is a 473-amino-acid chain: Uronate isomerase (473 aa).

The protein belongs to the metallo-dependent hydrolases superfamily. Uronate isomerase family.

The catalysed reaction is D-glucuronate = D-fructuronate. The enzyme catalyses aldehydo-D-galacturonate = keto-D-tagaturonate. It functions in the pathway carbohydrate metabolism; pentose and glucuronate interconversion. The protein is Uronate isomerase of Bacillus licheniformis (strain ATCC 14580 / DSM 13 / JCM 2505 / CCUG 7422 / NBRC 12200 / NCIMB 9375 / NCTC 10341 / NRRL NRS-1264 / Gibson 46).